A 986-amino-acid polypeptide reads, in one-letter code: Replication factor C subunit 1 (986 aa).

The disordered stretch occupies residues Met-1 to Asp-95. Residues Ser-18, Ser-28, Ser-40, Ser-41, Ser-48, and Ser-58 each carry the phosphoserine modification. Position 60 is a phosphothreonine (Thr-60). Phosphoserine occurs at positions 62 and 63. The residue at position 71 (Thr-71) is a Phosphothreonine. Phosphoserine is present on residues Ser-128, Ser-137, Ser-149, Ser-154, Ser-156, Ser-164, and Ser-194. Basic and acidic residues predominate over residues Glu-136–Val-147. Disordered stretches follow at residues Glu-136–Glu-203 and Lys-317–Pro-388. Residue Thr-197 is modified to Phosphothreonine. The BRCT domain occupies Gly-232–Glu-322. Composition is skewed to basic and acidic residues over residues Lys-317–Asp-364 and Val-370–Asn-385. Gly-487 to Thr-494 is an ATP binding site. The tract at residues Ser-913–Lys-986 is disordered. Residues Gly-917–Gly-932 are compositionally biased toward acidic residues. Residues Ser-938 and Ser-939 each carry the phosphoserine modification. A Nuclear localization signal motif is present at residues Lys-955–Arg-959. Residues Thr-962 to Lys-979 are compositionally biased toward low complexity.

It belongs to the activator 1 large subunit family. As to quaternary structure, interacts with C-terminus of PCNA.

Its subcellular location is the nucleus. Its function is as follows. The elongation of primed DNA templates by DNA polymerase delta and epsilon requires the action of the accessory proteins proliferating cell nuclear antigen (PCNA) and activator 1. This subunit binds to the primer-template junction. This Drosophila melanogaster (Fruit fly) protein is Replication factor C subunit 1 (Gnf1).